The sequence spans 209 residues: MIGLVGKKLGMTRIFTEDGVSIPVTVIEIEANRVTQVKDLANDGYRAVQVTTGSKKANRVTKPEAGHFAKAGVEAGRGLWEFRTAEGEEFTAGQNISVEIFAEVKKVDVTGTSKGKGFAGTVKRWNFRTQDATHGNSLSHRVPGSIGQNQTPGKVFKGKKMAGHLGDERVTVQSLDVVRVDAERNLLLVKGAVPGATGGNLIVKPAVKA.

Residues 133–153 form a disordered region; it reads THGNSLSHRVPGSIGQNQTPG. Gln-150 carries the N5-methylglutamine modification.

The protein belongs to the universal ribosomal protein uL3 family. As to quaternary structure, part of the 50S ribosomal subunit. Forms a cluster with proteins L14 and L19. Post-translationally, methylated by PrmB.

Its function is as follows. One of the primary rRNA binding proteins, it binds directly near the 3'-end of the 23S rRNA, where it nucleates assembly of the 50S subunit. The chain is Large ribosomal subunit protein uL3 from Serratia proteamaculans (strain 568).